Reading from the N-terminus, the 355-residue chain is DNA-directed RNA polymerase subunit alpha (355 aa).

Residues 1-248 are alpha N-terminal domain (alpha-NTD); that stretch reads MYYNNDVSLC…EQLQPFISSD (248 aa). An alpha C-terminal domain (alpha-CTD) region spans residues 267–355; it reads YDPVLLRKVD…ELAKQHTDED (89 aa).

Belongs to the RNA polymerase alpha chain family. Homodimer. The RNAP catalytic core consists of 2 alpha, 1 beta, 1 beta' and 1 omega subunit. When a sigma factor is associated with the core the holoenzyme is formed, which can initiate transcription.

It carries out the reaction RNA(n) + a ribonucleoside 5'-triphosphate = RNA(n+1) + diphosphate. Its function is as follows. DNA-dependent RNA polymerase catalyzes the transcription of DNA into RNA using the four ribonucleoside triphosphates as substrates. The sequence is that of DNA-directed RNA polymerase subunit alpha from Wolbachia pipientis wMel.